A 46-amino-acid chain; its full sequence is L-amino-acid oxidase (46 aa).

Asn31 carries N-linked (GlcNAc...) asparagine glycosylation.

The protein belongs to the flavin monoamine oxidase family. FIG1 subfamily. FAD is required as a cofactor.

The protein resides in the secreted. It is found in the lysosome. Its subcellular location is the cytoplasmic vesicle. It localises to the secretory vesicle. The protein localises to the acrosome. It catalyses the reaction an L-alpha-amino acid + O2 + H2O = a 2-oxocarboxylate + H2O2 + NH4(+). The enzyme catalyses L-tryptophan + O2 + H2O = indole-3-pyruvate + H2O2 + NH4(+). The catalysed reaction is L-phenylalanine + O2 + H2O = 3-phenylpyruvate + H2O2 + NH4(+). It carries out the reaction L-tyrosine + O2 + H2O = 3-(4-hydroxyphenyl)pyruvate + H2O2 + NH4(+). It catalyses the reaction L-arginine + O2 + H2O = 5-guanidino-2-oxopentanoate + H2O2 + NH4(+). It functions in the pathway amino-acid degradation; L-tryptophan degradation via pyruvate pathway. In terms of biological role, secreted L-amino-acid oxidase that acts as a key immunoregulator. Has preference for L-aromatic amino acids: converts phenylalanine (Phe), tyrosine (Tyr) and tryptophan (Trp) to phenylpyruvic acid (PP), hydroxyphenylpyruvic acid (HPP), and indole-3-pyruvic acid (I3P), respectively. Also has weak L-arginine oxidase activity. Acts as a negative regulator of anti-tumor immunity by mediating Trp degradation via an indole pyruvate pathway that activates the transcription factor AHR. IL4I1-mediated Trp catabolism generates I3P, giving rise to indole metabolites (indole-3-acetic acid (IAA) and indole-3-aldehyde (I3A)) and kynurenic acid, which act as ligands for AHR, a ligand-activated transcription factor that plays important roles in immunity and cancer. AHR activation by indoles following IL4I1-mediated Trp degradation enhances tumor progression by promoting cancer cell motility and suppressing adaptive immunity. Also has an immunoregulatory function in some immune cells, probably by mediating Trp degradation and promoting downstream AHR activation: inhibits T-cell activation and proliferation, promotes the differentiation of naive CD4(+) T-cells into FOXP3(+) regulatory T-cells (Treg) and regulates the development and function of B-cells. Also regulates M2 macrophage polarization by inhibiting T-cell activation. Also has antibacterial properties by inhibiting growth of Gram negative and Gram positive bacteria through the production of NH4(+) and H2O2. The chain is L-amino-acid oxidase from Mus spretus (Western Mediterranean mouse).